The chain runs to 257 residues: 1-(5-phosphoribosyl)-5-[(5-phosphoribosylamino)methylideneamino] imidazole-4-carboxamide isomerase (257 aa).

D8 acts as the Proton acceptor in catalysis. The active-site Proton donor is the D130.

It belongs to the HisA/HisF family.

It is found in the cytoplasm. The enzyme catalyses 1-(5-phospho-beta-D-ribosyl)-5-[(5-phospho-beta-D-ribosylamino)methylideneamino]imidazole-4-carboxamide = 5-[(5-phospho-1-deoxy-D-ribulos-1-ylimino)methylamino]-1-(5-phospho-beta-D-ribosyl)imidazole-4-carboxamide. Its pathway is amino-acid biosynthesis; L-histidine biosynthesis; L-histidine from 5-phospho-alpha-D-ribose 1-diphosphate: step 4/9. In Chlorobium chlorochromatii (strain CaD3), this protein is 1-(5-phosphoribosyl)-5-[(5-phosphoribosylamino)methylideneamino] imidazole-4-carboxamide isomerase.